The chain runs to 553 residues: Arginine--tRNA ligase (553 aa).

The 'HIGH' region motif lies at 130–140 (ANPTGDLHIGH).

This sequence belongs to the class-I aminoacyl-tRNA synthetase family. Monomer.

The protein localises to the cytoplasm. The enzyme catalyses tRNA(Arg) + L-arginine + ATP = L-arginyl-tRNA(Arg) + AMP + diphosphate. This Staphylococcus aureus (strain MSSA476) protein is Arginine--tRNA ligase.